A 166-amino-acid chain; its full sequence is Small ribosomal subunit protein uS5 (166 aa).

The region spanning 11–74 is the S5 DRBM domain; sequence LIEKLITVNR…EKARRNMVTV (64 aa).

It belongs to the universal ribosomal protein uS5 family. Part of the 30S ribosomal subunit. Contacts proteins S4 and S8.

Functionally, with S4 and S12 plays an important role in translational accuracy. Its function is as follows. Located at the back of the 30S subunit body where it stabilizes the conformation of the head with respect to the body. The sequence is that of Small ribosomal subunit protein uS5 from Idiomarina loihiensis (strain ATCC BAA-735 / DSM 15497 / L2-TR).